The primary structure comprises 278 residues: Rhomboid protease GlpG (278 aa).

The next 6 helical transmembrane spans lie at 94–114, 143–163, 175–195, 196–216, 224–241, and 245–267; these read AGPLTLSVMVLCIAIYILMLI, AFLHFSLLHILFNLMWWWYLG, LLVLTIVSAVFSGWGQSLFSG, ANFGGLSGVVYALMGYVWLTG, ISLPRGLMAFSVLWLIAG, and ILGLSIANAAHVSGLIIGLLMAF. The active-site Nucleophile is Ser202. The active site involves His255.

Belongs to the peptidase S54 family.

It localises to the cell inner membrane. It carries out the reaction Cleaves type-1 transmembrane domains using a catalytic dyad composed of serine and histidine that are contributed by different transmembrane domains.. Functionally, rhomboid-type serine protease that catalyzes intramembrane proteolysis. The chain is Rhomboid protease GlpG from Yersinia pseudotuberculosis serotype I (strain IP32953).